The chain runs to 359 residues: Dual-specificity RNA methyltransferase RlmN (359 aa).

Catalysis depends on glutamate 98, which acts as the Proton acceptor. The Radical SAM core domain maps to 104–329 (EPKRGTLCIS…LEHGLTATIR (226 aa)). Residues cysteine 111 and cysteine 340 are joined by a disulfide bond. Positions 118, 122, and 125 each coordinate [4Fe-4S] cluster. Residues 166–167 (GE), serine 198, 220–222 (SLH), and asparagine 297 contribute to the S-adenosyl-L-methionine site. The S-methylcysteine intermediate role is filled by cysteine 340.

Belongs to the radical SAM superfamily. RlmN family. It depends on [4Fe-4S] cluster as a cofactor.

The protein resides in the cytoplasm. The catalysed reaction is adenosine(2503) in 23S rRNA + 2 reduced [2Fe-2S]-[ferredoxin] + 2 S-adenosyl-L-methionine = 2-methyladenosine(2503) in 23S rRNA + 5'-deoxyadenosine + L-methionine + 2 oxidized [2Fe-2S]-[ferredoxin] + S-adenosyl-L-homocysteine. It carries out the reaction adenosine(37) in tRNA + 2 reduced [2Fe-2S]-[ferredoxin] + 2 S-adenosyl-L-methionine = 2-methyladenosine(37) in tRNA + 5'-deoxyadenosine + L-methionine + 2 oxidized [2Fe-2S]-[ferredoxin] + S-adenosyl-L-homocysteine. Its function is as follows. Specifically methylates position 2 of adenine 2503 in 23S rRNA and position 2 of adenine 37 in tRNAs. m2A2503 modification seems to play a crucial role in the proofreading step occurring at the peptidyl transferase center and thus would serve to optimize ribosomal fidelity. The chain is Dual-specificity RNA methyltransferase RlmN from Halorhodospira halophila (strain DSM 244 / SL1) (Ectothiorhodospira halophila (strain DSM 244 / SL1)).